Reading from the N-terminus, the 940-residue chain is Isoleucine--tRNA ligase (940 aa).

The short motif at 58 to 68 is the 'HIGH' region element; that stretch reads PYANGDIHIGH. Glutamate 564 lines the L-isoleucyl-5'-AMP pocket. A 'KMSKS' region motif is present at residues 605 to 609; the sequence is KMSKS. An ATP-binding site is contributed by lysine 608. Residues cysteine 903, cysteine 906, cysteine 923, and cysteine 926 each coordinate Zn(2+).

This sequence belongs to the class-I aminoacyl-tRNA synthetase family. IleS type 1 subfamily. As to quaternary structure, monomer. Requires Zn(2+) as cofactor.

The protein resides in the cytoplasm. The catalysed reaction is tRNA(Ile) + L-isoleucine + ATP = L-isoleucyl-tRNA(Ile) + AMP + diphosphate. Functionally, catalyzes the attachment of isoleucine to tRNA(Ile). As IleRS can inadvertently accommodate and process structurally similar amino acids such as valine, to avoid such errors it has two additional distinct tRNA(Ile)-dependent editing activities. One activity is designated as 'pretransfer' editing and involves the hydrolysis of activated Val-AMP. The other activity is designated 'posttransfer' editing and involves deacylation of mischarged Val-tRNA(Ile). The sequence is that of Isoleucine--tRNA ligase from Shewanella piezotolerans (strain WP3 / JCM 13877).